Consider the following 1550-residue polypeptide: Pentafunctional AROM polypeptide (1550 aa).

A 3-dehydroquinate synthase region spans residues 1 to 379 (MSIERVPILG…YQLKAHQVSK (379 aa)). NAD(+) is bound by residues 42-44 (DTN), 80-83 (ENNK), 111-113 (GGV), and aspartate 116. Arginine 127 is a binding site for 7-phospho-2-dehydro-3-deoxy-D-arabino-heptonate. Position 136-137 (136-137 (TT)) interacts with NAD(+). Residues aspartate 143 and lysine 149 each coordinate 7-phospho-2-dehydro-3-deoxy-D-arabino-heptonate. NAD(+) is bound at residue lysine 158. Asparagine 159 serves as a coordination point for 7-phospho-2-dehydro-3-deoxy-D-arabino-heptonate. Residues 176 to 179 (FLET) and asparagine 187 contribute to the NAD(+) site. Position 191 (glutamate 191) interacts with Zn(2+). Residues 191-194 (EVVK) and lysine 243 each bind 7-phospho-2-dehydro-3-deoxy-D-arabino-heptonate. Residue glutamate 253 is the Proton acceptor; for 3-dehydroquinate synthase activity of the active site. 7-phospho-2-dehydro-3-deoxy-D-arabino-heptonate-binding positions include 257–261 (RNLLN) and histidine 264. Histidine 264 serves as a coordination point for Zn(2+). Histidine 268 (proton acceptor; for 3-dehydroquinate synthase activity) is an active-site residue. 7-phospho-2-dehydro-3-deoxy-D-arabino-heptonate is bound by residues histidine 280 and lysine 351. Histidine 280 serves as a coordination point for Zn(2+). The EPSP synthase stretch occupies residues 392 to 837 (VHPFTNPPKE…WDILHSKFKI (446 aa)). The shikimate kinase stretch occupies residues 857–1047 (DKGVIVIGMR…VPTGRSTAVV (191 aa)). 864–871 (GMRGTGKS) is an ATP binding site. Residues 1048-1257 (LTLPDLNNVA…NDDGLLTIGE (210 aa)) form a 3-dehydroquinase region. Arginine 1193 functions as the Schiff-base intermediate with substrate; for 3-dehydroquinate dehydratase activity in the catalytic mechanism. The shikimate dehydrogenase stretch occupies residues 1270 to 1550 (AKKFWVIGSP…EIIHRAVVEE (281 aa)).

It in the N-terminal section; belongs to the sugar phosphate cyclases superfamily. Dehydroquinate synthase family. This sequence in the 2nd section; belongs to the EPSP synthase family. In the 3rd section; belongs to the shikimate kinase family. The protein in the 4th section; belongs to the type-I 3-dehydroquinase family. It in the C-terminal section; belongs to the shikimate dehydrogenase family. As to quaternary structure, homodimer. Requires Zn(2+) as cofactor.

The protein resides in the cytoplasm. It carries out the reaction 7-phospho-2-dehydro-3-deoxy-D-arabino-heptonate = 3-dehydroquinate + phosphate. It catalyses the reaction 3-dehydroquinate = 3-dehydroshikimate + H2O. The enzyme catalyses shikimate + NADP(+) = 3-dehydroshikimate + NADPH + H(+). The catalysed reaction is shikimate + ATP = 3-phosphoshikimate + ADP + H(+). It carries out the reaction 3-phosphoshikimate + phosphoenolpyruvate = 5-O-(1-carboxyvinyl)-3-phosphoshikimate + phosphate. The protein operates within metabolic intermediate biosynthesis; chorismate biosynthesis; chorismate from D-erythrose 4-phosphate and phosphoenolpyruvate: step 2/7. It participates in metabolic intermediate biosynthesis; chorismate biosynthesis; chorismate from D-erythrose 4-phosphate and phosphoenolpyruvate: step 3/7. Its pathway is metabolic intermediate biosynthesis; chorismate biosynthesis; chorismate from D-erythrose 4-phosphate and phosphoenolpyruvate: step 4/7. It functions in the pathway metabolic intermediate biosynthesis; chorismate biosynthesis; chorismate from D-erythrose 4-phosphate and phosphoenolpyruvate: step 5/7. The protein operates within metabolic intermediate biosynthesis; chorismate biosynthesis; chorismate from D-erythrose 4-phosphate and phosphoenolpyruvate: step 6/7. Functionally, the AROM polypeptide catalyzes 5 consecutive enzymatic reactions in prechorismate polyaromatic amino acid biosynthesis. The protein is Pentafunctional AROM polypeptide of Candida dubliniensis (strain CD36 / ATCC MYA-646 / CBS 7987 / NCPF 3949 / NRRL Y-17841) (Yeast).